Reading from the N-terminus, the 256-residue chain is Ubiquinone/menaquinone biosynthesis C-methyltransferase UbiE (256 aa).

Residues threonine 78 and aspartate 99 each coordinate S-adenosyl-L-methionine.

This sequence belongs to the class I-like SAM-binding methyltransferase superfamily. MenG/UbiE family.

It catalyses the reaction a 2-demethylmenaquinol + S-adenosyl-L-methionine = a menaquinol + S-adenosyl-L-homocysteine + H(+). It carries out the reaction a 2-methoxy-6-(all-trans-polyprenyl)benzene-1,4-diol + S-adenosyl-L-methionine = a 5-methoxy-2-methyl-3-(all-trans-polyprenyl)benzene-1,4-diol + S-adenosyl-L-homocysteine + H(+). Its pathway is quinol/quinone metabolism; menaquinone biosynthesis; menaquinol from 1,4-dihydroxy-2-naphthoate: step 2/2. It functions in the pathway cofactor biosynthesis; ubiquinone biosynthesis. In terms of biological role, methyltransferase required for the conversion of demethylmenaquinol (DMKH2) to menaquinol (MKH2) and the conversion of 2-polyprenyl-6-methoxy-1,4-benzoquinol (DDMQH2) to 2-polyprenyl-3-methyl-6-methoxy-1,4-benzoquinol (DMQH2). The sequence is that of Ubiquinone/menaquinone biosynthesis C-methyltransferase UbiE from Geobacter sulfurreducens (strain ATCC 51573 / DSM 12127 / PCA).